Here is a 421-residue protein sequence, read N- to C-terminus: Histidine--tRNA ligase (421 aa).

The protein belongs to the class-II aminoacyl-tRNA synthetase family.

Its subcellular location is the cytoplasm. The catalysed reaction is tRNA(His) + L-histidine + ATP = L-histidyl-tRNA(His) + AMP + diphosphate + H(+). This is Histidine--tRNA ligase from Pyrobaculum islandicum (strain DSM 4184 / JCM 9189 / GEO3).